Consider the following 529-residue polypeptide: Zinc metalloproteinase MspA (529 aa).

Residues 1 to 24 (MHHNYYLSPLAVALALGMVSPAKA) form the signal peptide. Residues 25 to 204 (ADPILLQNAS…PFVQWNDIKT (180 aa)) constitute a propeptide that is removed on maturation. Histidine 365 provides a ligand contact to Zn(2+). The active site involves glutamate 366. Residues histidine 369 and glutamate 389 each coordinate Zn(2+). Histidine 451 (proton donor) is an active-site residue.

This sequence belongs to the peptidase M4 family. It depends on Zn(2+) as a cofactor.

This is Zinc metalloproteinase MspA (mspA) from Legionella longbeachae.